Reading from the N-terminus, the 230-residue chain is 7-cyano-7-deazaguanine synthase (230 aa).

16–26 (LSGGLDSMVSG) lines the ATP pocket. Positions 195, 205, 208, and 211 each coordinate Zn(2+).

The protein belongs to the QueC family. Zn(2+) serves as cofactor.

The catalysed reaction is 7-carboxy-7-deazaguanine + NH4(+) + ATP = 7-cyano-7-deazaguanine + ADP + phosphate + H2O + H(+). It functions in the pathway purine metabolism; 7-cyano-7-deazaguanine biosynthesis. Functionally, catalyzes the ATP-dependent conversion of 7-carboxy-7-deazaguanine (CDG) to 7-cyano-7-deazaguanine (preQ(0)). The chain is 7-cyano-7-deazaguanine synthase from Rhizorhabdus wittichii (strain DSM 6014 / CCUG 31198 / JCM 15750 / NBRC 105917 / EY 4224 / RW1) (Sphingomonas wittichii).